Here is a 154-residue protein sequence, read N- to C-terminus: 6,7-dimethyl-8-ribityllumazine synthase (154 aa).

Residues Phe-23, 57–59, and 81–83 each bind 5-amino-6-(D-ribitylamino)uracil; these read AYE and AVI. Residue 86 to 87 participates in (2S)-2-hydroxy-3-oxobutyl phosphate binding; that stretch reads AT. His-89 serves as the catalytic Proton donor. Position 114 (Phe-114) interacts with 5-amino-6-(D-ribitylamino)uracil. Arg-128 contributes to the (2S)-2-hydroxy-3-oxobutyl phosphate binding site.

The protein belongs to the DMRL synthase family.

The enzyme catalyses (2S)-2-hydroxy-3-oxobutyl phosphate + 5-amino-6-(D-ribitylamino)uracil = 6,7-dimethyl-8-(1-D-ribityl)lumazine + phosphate + 2 H2O + H(+). The protein operates within cofactor biosynthesis; riboflavin biosynthesis; riboflavin from 2-hydroxy-3-oxobutyl phosphate and 5-amino-6-(D-ribitylamino)uracil: step 1/2. In terms of biological role, catalyzes the formation of 6,7-dimethyl-8-ribityllumazine by condensation of 5-amino-6-(D-ribitylamino)uracil with 3,4-dihydroxy-2-butanone 4-phosphate. This is the penultimate step in the biosynthesis of riboflavin. The protein is 6,7-dimethyl-8-ribityllumazine synthase of Desulforamulus reducens (strain ATCC BAA-1160 / DSM 100696 / MI-1) (Desulfotomaculum reducens).